The following is a 129-amino-acid chain: Small ribosomal subunit protein uS11 (129 aa).

It belongs to the universal ribosomal protein uS11 family. In terms of assembly, part of the 30S ribosomal subunit. Interacts with proteins S7 and S18. Binds to IF-3.

Functionally, located on the platform of the 30S subunit, it bridges several disparate RNA helices of the 16S rRNA. Forms part of the Shine-Dalgarno cleft in the 70S ribosome. This chain is Small ribosomal subunit protein uS11, found in Pseudomonas putida (strain GB-1).